A 495-amino-acid chain; its full sequence is ATP synthase subunit beta, chloroplastic (495 aa).

Position 172–179 (172–179 (GGAGVGKT)) interacts with ATP.

The protein belongs to the ATPase alpha/beta chains family. In terms of assembly, F-type ATPases have 2 components, CF(1) - the catalytic core - and CF(0) - the membrane proton channel. CF(1) has five subunits: alpha(3), beta(3), gamma(1), delta(1), epsilon(1). CF(0) has four main subunits: a(1), b(1), b'(1) and c(9-12).

Its subcellular location is the plastid. It localises to the chloroplast thylakoid membrane. It carries out the reaction ATP + H2O + 4 H(+)(in) = ADP + phosphate + 5 H(+)(out). In terms of biological role, produces ATP from ADP in the presence of a proton gradient across the membrane. The catalytic sites are hosted primarily by the beta subunits. The protein is ATP synthase subunit beta, chloroplastic of Pteridium aquilinum (Bracken fern).